A 313-amino-acid polypeptide reads, in one-letter code: MKDHQKIILVGDGAVGSSYAFACVNLSIGQEFGIIDIDKDRTIGDAMDLSHAVPFSTPKKIYSANYSDCHDADLVVVTAGTAQKPGETRLDLVNRNIKIMKGIVDEVMASGFDGIFLIASNPVDILTYATWKFSGLPKERVIGSGTSLDTARFRMSIADYLKVDARNVHGYILGEHGDTEFPAWSHTTVGGLPITEWISEDEQGAMDTIFVSVRDAAYEIINKKGATFYGVAAALARITKAILNNENAILPLSVYLDGHYGMNDIYIGAPAVVNRQGVRHIVEMNLNDKEKEQMKNSADTLKKVLDDAMKQID.

NAD(+) contacts are provided by V15, D36, R41, and Y66. Substrate contacts are provided by residues Q83, R89, and 121–124; that span reads NPVD. Residues 119–121 and S144 contribute to the NAD(+) site; that span reads ASN. 149–152 is a binding site for substrate; that stretch reads DTAR. Positions 154 and 169 each coordinate beta-D-fructose 1,6-bisphosphate. Catalysis depends on H176, which acts as the Proton acceptor. Y218 carries the post-translational modification Phosphotyrosine. A substrate-binding site is contributed by T227.

Belongs to the LDH/MDH superfamily. LDH family. Homotetramer.

It localises to the cytoplasm. The catalysed reaction is (S)-lactate + NAD(+) = pyruvate + NADH + H(+). It participates in fermentation; pyruvate fermentation to lactate; (S)-lactate from pyruvate: step 1/1. Allosterically activated by fructose 1,6-bisphosphate (FBP). Catalyzes the conversion of lactate to pyruvate. The chain is L-lactate dehydrogenase 1 from Listeria monocytogenes serotype 4b (strain F2365).